Consider the following 361-residue polypeptide: Chorismate synthase (361 aa).

Residues Arg-48 and Arg-54 each contribute to the NADP(+) site. FMN-binding positions include 131-133, 243-244, Gly-287, 302-306, and Arg-328; these read RSS, NA, and KPTSS.

This sequence belongs to the chorismate synthase family. Homotetramer. FMNH2 is required as a cofactor.

The enzyme catalyses 5-O-(1-carboxyvinyl)-3-phosphoshikimate = chorismate + phosphate. The protein operates within metabolic intermediate biosynthesis; chorismate biosynthesis; chorismate from D-erythrose 4-phosphate and phosphoenolpyruvate: step 7/7. In terms of biological role, catalyzes the anti-1,4-elimination of the C-3 phosphate and the C-6 proR hydrogen from 5-enolpyruvylshikimate-3-phosphate (EPSP) to yield chorismate, which is the branch point compound that serves as the starting substrate for the three terminal pathways of aromatic amino acid biosynthesis. This reaction introduces a second double bond into the aromatic ring system. This Rhodopseudomonas palustris (strain HaA2) protein is Chorismate synthase.